The sequence spans 165 residues: Transcription antitermination protein NusB (165 aa).

The protein belongs to the NusB family.

In terms of biological role, involved in transcription antitermination. Required for transcription of ribosomal RNA (rRNA) genes. Binds specifically to the boxA antiterminator sequence of the ribosomal RNA (rrn) operons. The polypeptide is Transcription antitermination protein NusB (Bradyrhizobium diazoefficiens (strain JCM 10833 / BCRC 13528 / IAM 13628 / NBRC 14792 / USDA 110)).